Reading from the N-terminus, the 104-residue chain is PE-PGRS family protein PE_PGRS60 (104 aa).

The PE domain occupies 1-60 (MSYVIAAPEALVAAATDLATLGSTIGAANAAAAGSTTALLTAGADEVSAAIAAYSECTAR). The disordered stretch occupies residues 64-104 (HSVRGRRRSMSGSCRPWPQVGAPMRPPRPPASRRCRARSIC). Residues 94–104 (ASRRCRARSIC) show a composition bias toward basic residues.

The protein belongs to the mycobacterial PE family. PGRS subfamily.

Binds fibronectin. May contribute to pathogenicity. This chain is PE-PGRS family protein PE_PGRS60, found in Mycobacterium tuberculosis (strain ATCC 25618 / H37Rv).